The primary structure comprises 396 residues: Elongation factor Tu (396 aa).

Positions 10–206 (KPHCNIGTIG…NVDEYIPQPE (197 aa)) constitute a tr-type G domain. The segment at 19–26 (GHVDHGKT) is G1. 19–26 (GHVDHGKT) contributes to the GTP binding site. Residue threonine 26 participates in Mg(2+) binding. The tract at residues 60–64 (GITIS) is G2. Residues 81 to 84 (DCPG) are G3. Residues 81-85 (DCPGH) and 136-139 (NKCD) contribute to the GTP site. Positions 136–139 (NKCD) are G4. Residues 174–176 (SAL) are G5.

It belongs to the TRAFAC class translation factor GTPase superfamily. Classic translation factor GTPase family. EF-Tu/EF-1A subfamily. Monomer.

The protein localises to the cytoplasm. The enzyme catalyses GTP + H2O = GDP + phosphate + H(+). Its function is as follows. GTP hydrolase that promotes the GTP-dependent binding of aminoacyl-tRNA to the A-site of ribosomes during protein biosynthesis. This Afipia carboxidovorans (strain ATCC 49405 / DSM 1227 / KCTC 32145 / OM5) (Oligotropha carboxidovorans) protein is Elongation factor Tu.